A 797-amino-acid chain; its full sequence is Ubiquitin carboxyl-terminal hydrolase 14 (797 aa).

Residues 156-266 form a UBP-type; degenerate zinc finger; the sequence is LISEHALTLQ…EHLAHFGIDF (111 aa). Residues C180, C183, C200, and H213 each contribute to the Zn(2+) site. The USP domain occupies 308–796; it reads TGLVNLGNSC…MGYVYFFQRL (489 aa). The active-site Nucleophile is the C317. 2 UBA domains span residues 613–654 and 670–710; these read VANE…LLSH and DIDQ…VFNN. The Proton acceptor role is filled by H758.

The protein belongs to the peptidase C19 family. Constitutively and ubiquitously expressed (at protein level).

The catalysed reaction is Thiol-dependent hydrolysis of ester, thioester, amide, peptide and isopeptide bonds formed by the C-terminal Gly of ubiquitin (a 76-residue protein attached to proteins as an intracellular targeting signal).. Recognizes and hydrolyzes the peptide bond at the C-terminal Gly of ubiquitin. Involved in the processing of poly-ubiquitin precursors as well as that of ubiquitinated proteins. Involved in seed and embryo development. The chain is Ubiquitin carboxyl-terminal hydrolase 14 (UBP14) from Arabidopsis thaliana (Mouse-ear cress).